The sequence spans 69 residues: Large ribosomal subunit protein bL31 (69 aa).

Residues cysteine 17, cysteine 19, cysteine 37, and cysteine 40 each coordinate Zn(2+).

Belongs to the bacterial ribosomal protein bL31 family. Type A subfamily. Part of the 50S ribosomal subunit. Requires Zn(2+) as cofactor.

In terms of biological role, binds the 23S rRNA. This is Large ribosomal subunit protein bL31 from Thermoanaerobacter pseudethanolicus (strain ATCC 33223 / 39E) (Clostridium thermohydrosulfuricum).